The following is a 359-amino-acid chain: sn-1 acyl-lipid omega-3 desaturase (ferredoxin) (359 aa).

Transmembrane regions (helical) follow at residues 44–64 and 67–87; these read LGYF…AAYL and WFFY…LFVV. The Histidine box-1 motif lies at 89–93; sequence HDCGH. The Histidine box-2 signature appears at 125-129; that stretch reads HRTHH. The next 3 membrane-spanning stretches (helical) occupy residues 153–173, 206–226, and 228–248; these read AWYE…IYLF, LAAF…LFLL, and FYVA…FLHH. The Histidine box-3 motif lies at 291–295; it reads HHIFS.

It belongs to the fatty acid desaturase type 2 family. Requires Fe(2+) as cofactor.

It localises to the membrane. The catalysed reaction is a 1-[(9Z,12Z)-octadecdienoyl]-2-acyl-glycerolipid + 2 reduced [2Fe-2S]-[ferredoxin] + O2 + 2 H(+) = a 1-[(9Z,12Z,15Z)-octadectrienoyl]-2-acyl-glycerolipid + 2 oxidized [2Fe-2S]-[ferredoxin] + 2 H2O. It catalyses the reaction a 1-[(6Z,9Z,12Z)-octadectrienoyl]-2-acyl-glycerolipid + 2 reduced [2Fe-2S]-[ferredoxin] + O2 + 2 H(+) = a 1-[(6Z,9Z,12Z,15Z)-octadectetraenoyl]-2-acyl-glycerolipid + 2 oxidized [2Fe-2S]-[ferredoxin] + 2 H2O. It functions in the pathway lipid metabolism; polyunsaturated fatty acid biosynthesis. Its function is as follows. Desaturase involved in fatty acid biosynthesis. Introduces a double bond at carbon 15 of linoleoyl and gamma-linolenoyl groups attached to the sn-1 position of the glycerol moiety of membrane glycerolipids. This is sn-1 acyl-lipid omega-3 desaturase (ferredoxin) from Synechocystis sp. (strain ATCC 27184 / PCC 6803 / Kazusa).